The following is a 182-amino-acid chain: Functional amyloid subunit FapB (182 aa).

The N-terminal stretch at 1–18 (MTHSWLLLTVLGCSAAMA) is a signal peptide. Residues 22–58 (NQALIDNAGKQYTGVLSVNQAAGNQHQQINSRAISLG) form a FapB_R1 repeat. Residues 80–114 (SAAIQGSAFSNGNGILGVNQSAGANNQMINAVRIS) form a FapB_R2 repeat. One copy of the FapB_R3 repeat lies at 150 to 180 (SDQAFTGSRGVVQVNQSAGVGNRMANTLGVT).

Belongs to the FapB/FapC family. Forms fibrils in vitro; in the presence of FapA the fibrils are slightly narrower. A minor component of purified amyloid fibrils. Fibrils are resistant to boiling in 2% (weight/vol) SDS and require &gt;90% (vol/vol) formic acid to dissolve.

The protein resides in the fimbrium. Its subcellular location is the secreted. Functionally, a minor component of the functional amyloid in this bacterium. Probably nucleates fibril formation; FapB nucleates fibrillation its own, FapA inhibits FapB fibril elongation. Upon overexpression of the endogenous six-gene locus (fapA-fapF) in situ, cells form large clumps during liquid growth, make large amounts of biofilm and produce amyloid fibrils. Expression of the 6 gene operon in E.coli strain BL21(DE3) induces flocculation and biofilm formation with copious extracellular fibrils. This chain is Functional amyloid subunit FapB, found in Pseudomonas fluorescens.